The chain runs to 64 residues: Large ribosomal subunit protein bL35 (64 aa).

Residues 18–39 form a disordered region; that stretch reads GSGLVKHYPSNKHHKNTHKKEN. Over residues 26–39 the composition is skewed to basic residues; it reads PSNKHHKNTHKKEN.

This sequence belongs to the bacterial ribosomal protein bL35 family.

The polypeptide is Large ribosomal subunit protein bL35 (Symbiobacterium thermophilum (strain DSM 24528 / JCM 14929 / IAM 14863 / T)).